We begin with the raw amino-acid sequence, 155 residues long: Movement protein TGB3 (155 aa).

The Cytoplasmic segment spans residues 1-59 (MAMPHPLECCCPQCLPSSESFPIYGEQEIPCSETQAETTPVEKTVRANVLTDILDDHYY). The helical transmembrane segment at 60–80 (AILASLFIIALWLLYIYLSSI) threads the bilayer. The Lumenal segment spans residues 81–130 (PTETGPYFYQDLNSVKIYGIGATNPEVIAAIHHWQKYPFGESPMWGGLIS). Positions 89–93 (YQDLN) match the Involved in plasmodesmata targeting and virus cell-to-cell movement motif. The helical transmembrane segment at 131-151 (VLSILLKPLTLVFALSFFLLL) threads the bilayer. The required for attachment to the host plasmodesmata-associated membrane compartments stretch occupies residues 150–155 (LLSSKR). Residues 152–155 (SSKR) are Cytoplasmic-facing.

The protein belongs to the virgaviridae TGB3 movement protein family. As to quaternary structure, interacts with movement proteins TGB1 and TGB2. TGB1-TGB3-TGB2 complex formation is enhanced by ATP hydrolysis.

It localises to the host cell junction. The protein localises to the host plasmodesma. It is found in the host endoplasmic reticulum membrane. Its subcellular location is the host cytoplasm. The protein resides in the host cytoskeleton. Participates in the transport of viral genome to neighboring plant cells directly through plasmodesmata, without any budding. TGBp2 and TGBp3 are necessary for intracellular delivery of TGBp1-containing vRNPs to plasmodesmata. Can gate plasmodesmata and increase their size exclusion limit. Induces host actin cytoskeleton network thickening, which probably plays a major role in virus cell-to-cell movement. The chain is Movement protein TGB3 from Hordeum vulgare (Barley).